We begin with the raw amino-acid sequence, 113 residues long: uncharacterized protein (113 aa).

The protein localises to the cytoplasm. It is found in the nucleus. This is an uncharacterized protein from Saccharomyces cerevisiae (strain ATCC 204508 / S288c) (Baker's yeast).